We begin with the raw amino-acid sequence, 1110 residues long: cGMP-specific 3',5'-cyclic phosphodiesterase (1110 aa).

Low complexity-rich tracts occupy residues 1–25 (MTDVSAAAGGATAPAETAATSSSAS) and 35–55 (TSTAMAAPTATPTTAATASGA). 3 disordered regions span residues 1–55 (MTDV…ASGA), 67–128 (ISNQ…QQDV), and 184–203 (ASPTVQQKSPRSLSNSSASS). Residues 88 to 103 (APYPPVPAAKPKPTPT) are compositionally biased toward pro residues. The segment covering 192 to 203 (SPRSLSNSSASS) has biased composition (low complexity). GAF domains lie at 233-385 (DIDV…GIGI) and 417-601 (NLEC…GLGI). A PDEase domain is found at 631–954 (SQDQTEKLTQ…RNWQDLAEKV (324 aa)). The active-site Proton donor is H707. H711, H747, D748, and D858 together coordinate a divalent metal cation. Disordered regions lie at residues 997 to 1028 (AQHGAGAGGDDSHTPEHQRSGSRLSMKKTGAL) and 1040 to 1110 (LYNS…CSLL). Composition is skewed to basic and acidic residues over residues 1006-1015 (DDSHTPEHQR) and 1056-1068 (LESHVSEDMDDKS). The segment covering 1082–1097 (GRMSASSSTSSAGTVV) has biased composition (low complexity). Residues 1100 to 1110 (SKKRSKLCSLL) show a composition bias toward basic residues. C1107 is modified (cysteine methyl ester). Residue C1107 is the site of S-farnesyl cysteine attachment. Residues 1108-1110 (SLL) constitute a propeptide, removed in mature form.

It belongs to the cyclic nucleotide phosphodiesterase family. Interacts with PrBP. The cofactor is a divalent metal cation.

The protein resides in the cell membrane. The catalysed reaction is 3',5'-cyclic GMP + H2O = GMP + H(+). In terms of biological role, has a role regulating cGMP transport in Malpighian tubule principal cells. This is cGMP-specific 3',5'-cyclic phosphodiesterase from Drosophila pseudoobscura pseudoobscura (Fruit fly).